We begin with the raw amino-acid sequence, 146 residues long: Angiogenin (146 aa).

Residues 1-24 (MVMGLHLLLLVFILGLGLTPPTLA) form the signal peptide. The residue at position 25 (Gln-25) is a Pyrrolidone carboxylic acid. Residue His-37 is the Proton acceptor of the active site. 3 disulfide bridges follow: Cys-50–Cys-105, Cys-63–Cys-116, and Cys-81–Cys-131. The Nucleolar localization signal motif lies at 55-59 (RLRNM). Cys-105 is a tRNA binding site. The active-site Proton donor is His-138.

The protein belongs to the pancreatic ribonuclease family. As to quaternary structure, homodimer. Interacts with RNH1; inhibiting ANG ribonuclease activity. Interacts with PCNA.

The protein resides in the secreted. Its subcellular location is the nucleus. It localises to the nucleolus. It is found in the cytoplasm. The protein localises to the stress granule. Has weak tRNA ribonuclease activity by itself due to partial autoinhibition by its C-terminus, which folds into a short alpha-helix that partially occludes the substrate-binding site. In absence of stress, the ribonuclease activity is inhibited by RNH1 in the cytoplasm. In response to stress, dissociates from RNH1 in the cytoplasm and associates with cytoplasmic ribosomes with vacant A-sites: ribosomes directly activate the tRNA ribonuclease activity of ANG by refolding the C-terminal alpha-helix. In response to stress, the angiogenic activity of ANG is inhibited by RNH1 in the nucleus. Its function is as follows. Secreted ribonuclease that can either promote or restrict cell proliferation of target cells, depending on the context. Endocytosed in target cells via its receptor PLXNB2 and translocates to the cytoplasm or nucleus. Under stress conditions, localizes to the cytoplasm and promotes the assembly of stress granules (SGs): specifically cleaves a subset of tRNAs within anticodon loops to produce tRNA-derived stress-induced fragments (tiRNAs), resulting in translation repression and inhibition of cell proliferation. tiRNas also prevent formation of apoptosome, thereby promoting cell survival. Preferentially cleaves RNAs between a pyrimidine and an adenosine residue, suggesting that it cleaves the anticodon loop of tRNA(Ala) (32-UUAGCAU-38) after positions 33 and 36. Cleaves a subset of tRNAs, including tRNA(Ala), tRNA(Glu), tRNA(Gly), tRNA(Lys), tRNA(Val), tRNA(His), tRNA(Asp) and tRNA(Sec). Under growth conditions and in differentiated cells, translocates to the nucleus and stimulates ribosomal RNA (rRNA) transcription, including that containing the initiation site sequences of 45S rRNA, thereby promoting cell growth and proliferation. Angiogenin induces vascularization of normal and malignant tissues via its ability to promote rRNA transcription. Involved in hematopoietic stem and progenitor cell (HSPC) growth and survival by promoting rRNA transcription in growth conditions and inhibiting translation in response to stress, respectively. Mediates the crosstalk between myeloid and intestinal epithelial cells to protect the intestinal epithelial barrier integrity: secreted by myeloid cells and promotes intestinal epithelial cells proliferation and survival. Also mediates osteoclast-endothelial cell crosstalk in growing bone: produced by osteoclasts and protects the neighboring vascular cells against senescence by promoting rRNA transcription. This is Angiogenin (ANG) from Aotus trivirgatus (Three-striped night monkey).